The primary structure comprises 681 residues: Sterile alpha motif domain-containing protein 11 (681 aa).

Disordered regions lie at residues 41–77, 212–234, 251–307, and 407–498; these read RNLK…EDGP, YHLG…HLPS, GPSG…APHV, and LLAL…GAEG. Residue Lys72 forms a Glycyl lysine isopeptide (Lys-Gly) (interchain with G-Cter in SUMO2) linkage. The span at 219–234 shows a compositional bias: basic and acidic residues; sequence HGEDPPWHDPPHHLPS. Positions 412–423 are enriched in pro residues; that stretch reads PQGPPGSGPPTP. Thr485 bears the Phosphothreonine mark. Positions 543 to 608 constitute an SAM domain; it reads WTVDDVCSFV…AQVARRLGRV (66 aa). Positions 625 to 681 are disordered; the sequence is LRAPERELGTGEQPLSPTTATSPYGGGHALAGQTSPKQENGTLALLPGAPDPSQPLC. Polar residues-rich tracts occupy residues 637–646 and 656–665; these read QPLSPTTATS and GQTSPKQENG. Residue Ser640 is modified to Phosphoserine.

As to quaternary structure, self-associates. Component of a Polycomb group (PcG) multiprotein PRC1-like complex. Interacts with SAMD7 and PHC2. In terms of tissue distribution, expressed in the outer and inner nuclear layers, ganglion cell layer and rod photoreceptors of the retina (at protein level). Widely expressed, showing the highest expression in kidney, prostate and retina.

It is found in the nucleus. Functionally, component of a Polycomb group (PcG) multiprotein PRC1-like complex, essential for establishing rod photoreceptor cell identity and function by silencing nonrod gene expression in developing rod photoreceptor cells. This Homo sapiens (Human) protein is Sterile alpha motif domain-containing protein 11 (SAMD11).